A 328-amino-acid polypeptide reads, in one-letter code: MAVNGASSSGLIVSFGEMLIDFVPTVSGVSLAEAPGFLKAPGGAPANVAIAVTRLGGRSAFVGKLGDDEFGHMLAGILKTNGVQADGINFDKGARTALAFVTLRADGEREFMFYRNPSADMLLTPAELNLDLIRSAKVFHYGSISLIVEPCRAAHMKAMEVAKEAGALLSYDPNLRLPLWPSAEEAKKQIKSIWDSADVIKVSDVELEFLTGSNKIDDESAMSLWHPNLKLLLVTLGEKGCNYYTKKFHGTVGGFHVKTVDTTGAGDSFVGALLTKIVDDQTILADEARLKEVLRFSCACGAITTTKKGAIPALPTASEALTLLKGGA.

This sequence belongs to the carbohydrate kinase PfkB family.

The catalysed reaction is D-fructose + ATP = D-fructose 6-phosphate + ADP + H(+). Its pathway is glycan biosynthesis; starch biosynthesis. In terms of biological role, may play an important role in maintaining the flux of carbon towards starch formation. This Solanum habrochaites (Wild tomato) protein is Fructokinase-2 (FRK2).